A 423-amino-acid polypeptide reads, in one-letter code: Histidine--tRNA ligase (423 aa).

It belongs to the class-II aminoacyl-tRNA synthetase family. Homodimer.

The protein localises to the cytoplasm. It carries out the reaction tRNA(His) + L-histidine + ATP = L-histidyl-tRNA(His) + AMP + diphosphate + H(+). The polypeptide is Histidine--tRNA ligase (Orientia tsutsugamushi (strain Boryong) (Rickettsia tsutsugamushi)).